We begin with the raw amino-acid sequence, 316 residues long: Endochitinase 2 (316 aa).

The signal sequence occupies residues 1–18 (EFTTLFLLFSVLLLSASA). A Chitin-binding type-1 domain is found at 19–60 (EQCGSQAGGALCASGLCCSKFGWCGNTNDYCGPGNCQSQCPG). 7 disulfides stabilise this stretch: Cys21/Cys36, Cys30/Cys42, Cys35/Cys49, Cys54/Cys58, Cys87/Cys150, Cys162/Cys170, and Cys269/Cys301. Residue Glu132 is the Proton donor of the active site. Residues 310 to 316 (GLLVDTV) constitute a propeptide, removed in mature form, vacuolar targeting.

It belongs to the glycosyl hydrolase 19 family. Chitinase class I subfamily.

The protein localises to the vacuole. The enzyme catalyses Random endo-hydrolysis of N-acetyl-beta-D-glucosaminide (1-&gt;4)-beta-linkages in chitin and chitodextrins.. Its function is as follows. Defense against chitin-containing fungal pathogens. This chain is Endochitinase 2 (CHTB2), found in Solanum tuberosum (Potato).